We begin with the raw amino-acid sequence, 308 residues long: Growth/differentiation factor 15 (308 aa).

A signal peptide spans 1–29 (MPGQELKTLNGSQMLLVLLVLLWPPHGGA). Positions 30-192 (VSLAEASRAS…HLRPRASRGR (163 aa)) are excised as a propeptide. An N-linked (GlcNAc...) asparagine glycan is attached at Asn-70. Residues 152 to 179 (APALHLRLSPPPSQSDQLLVKSSSSRPQ) are disordered. The span at 165–178 (QSDQLLVKSSSSRP) shows a compositional bias: polar residues. Disulfide bonds link Cys-203-Cys-210, Cys-211-Cys-274, Cys-240-Cys-305, and Cys-244-Cys-307.

The protein belongs to the TGF-beta family. As to quaternary structure, homodimer; disulfide-linked. Interacts with GFRAL and RET; ligand of GFRAL, which mediates GDF15 internalization and cellular signaling through interaction with RET via the formation of a 2:2:2 ternary complex composed of GDF15, GFRAL and RET. In terms of tissue distribution, detected in plasma (at protein level).

It is found in the secreted. Its function is as follows. Hormone produced in response to various stresses to confer information about those stresses to the brain, and trigger an aversive response, characterized by nausea and/or loss of appetite. The aversive response is both required to reduce continuing exposure to those stresses at the time of exposure and to promote avoidance behavior in the future. Acts by binding to its receptor, GFRAL, activating GFRAL-expressing neurons localized in the area postrema and nucleus tractus solitarius of the brainstem. It then triggers the activation of neurons localized within the parabrachial nucleus and central amygdala, which constitutes part of the 'emergency circuit' that shapes responses to stressful conditions. The GDF15-GFRAL signal induces expression of genes involved in metabolism, such as lipid metabolism in adipose tissues. Required for avoidance behavior in response to food allergens: induced downstream of mast cell activation to promote aversion and minimize harmful effects of exposure to noxious substances. In addition to suppress appetite, also promotes weight loss by enhancing energy expenditure in muscle: acts by increasing calcium futile cycling in muscle. Contributes to the effect of metformin, an anti-diabetic drug, on appetite reduction and weight loss: produced in the kidney in response to metformin treatment, thereby activating the GDF15-GFRAL response, leading to reduced appetite and weight. Produced in response to anticancer drugs, such as camptothecin or cisplatin, promoting nausea and contributing to malnutrition. Overproduced in many cancers, promoting anorexia in cancer (cachexia). Responsible for the risk of nausea during pregnancy: high levels of GDF15 during pregnancy, mostly originating from embryos, are associated with increased nausea. Maternal sensitivity to nausea is probably determined by pre-pregnancy exposure to GDF15, females with naturally high level of GDF15 being less susceptible to nausea than females with low levels of GDF15 before pregnancy. Promotes metabolic adaptation in response to systemic inflammation caused by bacterial and viral infections in order to promote tissue tolerance and prevent tissue damage. Inhibits growth hormone signaling on hepatocytes. The sequence is that of Growth/differentiation factor 15 from Macaca fascicularis (Crab-eating macaque).